The sequence spans 206 residues: Small ribosomal subunit protein uS4 (206 aa).

One can recognise an S4 RNA-binding domain in the interval 96–158; sequence SRLDNVVYRM…AKGQLRIKGA (63 aa).

It belongs to the universal ribosomal protein uS4 family. As to quaternary structure, part of the 30S ribosomal subunit. Contacts protein S5. The interaction surface between S4 and S5 is involved in control of translational fidelity.

Its function is as follows. One of the primary rRNA binding proteins, it binds directly to 16S rRNA where it nucleates assembly of the body of the 30S subunit. With S5 and S12 plays an important role in translational accuracy. This Coxiella burnetii (strain CbuG_Q212) (Coxiella burnetii (strain Q212)) protein is Small ribosomal subunit protein uS4.